A 270-amino-acid polypeptide reads, in one-letter code: 4-hydroxy-tetrahydrodipicolinate reductase (270 aa).

NAD(+)-binding positions include 8 to 13 and Glu-34; that span reads GAAGRM. NADP(+) is bound at residue Arg-35. NAD(+)-binding positions include 98 to 100 and 122 to 125; these read GST and SPNM. His-155 (proton donor/acceptor) is an active-site residue. His-156 serves as a coordination point for (S)-2,3,4,5-tetrahydrodipicolinate. Residue Lys-159 is the Proton donor of the active site. Residue 165–166 coordinates (S)-2,3,4,5-tetrahydrodipicolinate; the sequence is GT.

Belongs to the DapB family.

It localises to the cytoplasm. It catalyses the reaction (S)-2,3,4,5-tetrahydrodipicolinate + NAD(+) + H2O = (2S,4S)-4-hydroxy-2,3,4,5-tetrahydrodipicolinate + NADH + H(+). The enzyme catalyses (S)-2,3,4,5-tetrahydrodipicolinate + NADP(+) + H2O = (2S,4S)-4-hydroxy-2,3,4,5-tetrahydrodipicolinate + NADPH + H(+). It functions in the pathway amino-acid biosynthesis; L-lysine biosynthesis via DAP pathway; (S)-tetrahydrodipicolinate from L-aspartate: step 4/4. Catalyzes the conversion of 4-hydroxy-tetrahydrodipicolinate (HTPA) to tetrahydrodipicolinate. This chain is 4-hydroxy-tetrahydrodipicolinate reductase, found in Anaeromyxobacter dehalogenans (strain 2CP-1 / ATCC BAA-258).